The following is a 345-amino-acid chain: MVKVIYKFAVFAAVNFFLMSSIVLYFNNEFLMFADRCTKDIIPSEELRYLRQVLNDSIPSKDEPLPTLKLDSLNDISGEPVIPKIIHQTWKTTEVPEGWKGAQQSCIDLHPDYEYILWTDEMSRNFIADNYPWFLPYFDAYPFNVQRADVIRYFVLYHYGGNYIDLDDGCRQRLDSLLYYPVWVRRTDPVGVSNDVMGSVPHHPYFELIIQNLEKNAKSYWLPYLTIMLSTGPLSISFLWEKYKRQLPNPPAFYDHIRVLLERDYKFSNDSYFTFYEGSSWHNNDAGIILWANRHLAYVIVAGFCLYFILSYMFFSKLLDSRYVQRFVTSKRKQPTLPLALQEDV.

The helical transmembrane segment at 4–24 (VIYKFAVFAAVNFFLMSSIVL) threads the bilayer. A glycan (N-linked (GlcNAc...) asparagine) is linked at N55. A helical membrane pass occupies residues 220–240 (YWLPYLTIMLSTGPLSISFLW). The N-linked (GlcNAc...) asparagine glycan is linked to N269. The chain crosses the membrane as a helical span at residues 296-316 (LAYVIVAGFCLYFILSYMFFS).

It belongs to the glycosyltransferase 32 family.

It is found in the golgi apparatus. It localises to the cis-Golgi network membrane. Its subcellular location is the trans-Golgi network membrane. Its function is as follows. With imt1 and imt3, is required for the synthesis of mannosyl phosphorylinositol ceramide (MIPC). Catalyzes the addition of mannosyl to phosphorylinositol ceramide (IPC). MIPC is essential for cell morphology, cell-surface distribution of ergosterol, localization for plasma-membrane transporters, and lipid-raft-mediated endocytosis of plasma membrane proteins to the vacuole. The polypeptide is Inositol phosphoceramide mannosyltransferase 2 (Schizosaccharomyces pombe (strain 972 / ATCC 24843) (Fission yeast)).